Consider the following 175-residue polypeptide: FOXL2 neighbor protein (175 aa).

Disordered regions lie at residues 1–39 (MTRT…PALV) and 70–100 (AQKT…GKRR).

In Homo sapiens (Human), this protein is FOXL2 neighbor protein (FOXL2NB).